A 1177-amino-acid chain; its full sequence is Solute carrier family 9 member C1 (1177 aa).

Topologically, residues 1–17 (MAGIFKEFFFSTEDLPE) are extracellular. Residues 18–37 (VILTLSLISSIGAFLNRHLE) traverse the membrane as a helical segment. Residues 38–42 (DFPIP) are Cytoplasmic-facing. A helical transmembrane segment spans residues 43 to 60 (VPVILFLLGCSFEVLSFT). The Extracellular portion of the chain corresponds to 61-76 (SSQVQRYANAIQWMSP). The helical transmembrane segment at 77–93 (DLFFRIFTPVVFFTTAF) threads the bilayer. Residues 94 to 103 (DMDTYMLQKL) are Cytoplasmic-facing. The helical transmembrane segment at 104 to 129 (FWQILLISIPGFLVNYILVLWHLASV) threads the bilayer. Residues 104–191 (FWQILLISIP…SLITFTSIMD (88 aa)) are transport core domain. Residues 130–135 (NQLLLK) are Extracellular-facing. Residues 136-161 (PTQWLLFSAILVSSDPMLTAAAIRDL) form a helical membrane-spanning segment. The Cytoplasmic portion of the chain corresponds to 162-164 (GLS). A helical membrane pass occupies residues 165–190 (RSLISLINGESLMTSVISLITFTSIM). At 191-204 (DFDQRLQSKRNHTL) the chain is on the extracellular side. A helical transmembrane segment spans residues 205-236 (AEEIVGGICSYIIASFLFGILSSKLIQFWMST). The Cytoplasmic portion of the chain corresponds to 237-240 (VFGD). The chain crosses the membrane as a helical span at residues 241–262 (DVNHISLIFSILYLIFYICELV). Residues 263–265 (GMS) lie on the Extracellular side of the membrane. Residues 266-279 (GIFTLAIVGLLLNS) form a helical membrane-spanning segment. Residues 280 to 286 (TSFKAAI) lie on the Cytoplasmic side of the membrane. A helical membrane pass occupies residues 287-319 (EETLLLEFWTFLSRIAFLMVFTFFGLLIPAHTY). At 320 to 324 (LYIEF) the chain is on the extracellular side. The chain crosses the membrane as a helical span at residues 325-354 (VDIYYSLNIYLTLIVLRFLTLLLISPVLSR). A transport core domain region spans residues 325–426 (VDIYYSLNIY…FILPVAVTIL (102 aa)). Residues 355 to 360 (VGHEFS) are Cytoplasmic-facing. The helical transmembrane segment at 361–391 (WRWIFIMVCSEMKGMPNINMALLLAYSDLYF) threads the bilayer. Residues 392 to 395 (GSDK) are Extracellular-facing. A helical membrane pass occupies residues 396–426 (EKSQILFHGVLVCLITLVVNRFILPVAVTIL). Residues 427-612 (GLRDATSTKY…ICHTIVFTEE (186 aa)) lie on the Cytoplasmic side of the membrane. Positions 598 to 678 (YFFFRICHTI…DFFSHAWNIF (81 aa)) are ion transport-like. Residues 613 to 633 (FEHVGYLVILMNIFPFIISWI) traverse the membrane as a helical segment. Topologically, residues 634-637 (SQLN) are extracellular. The helical transmembrane segment at 638–664 (VIYHSELKHTNYCFLTLYILEALLKIA) threads the bilayer. The Cytoplasmic portion of the chain corresponds to 665 to 671 (AMRKDFF). A helical membrane pass occupies residues 672–696 (SHAWNIFELAITLIGILHVILIEID). Residues 697–704 (TIKYIFNE) are Extracellular-facing. Residues 705–731 (TEVIVFIKVVQFFRILRIFKLIAPKLL) traverse the membrane as a helical segment. Topologically, residues 732–1177 (QIIDKRMSHQ…RINLRKVRKE (446 aa)) are cytoplasmic.

The protein belongs to the monovalent cation:proton antiporter 1 (CPA1) transporter (TC 2.A.36) family. In terms of assembly, interacts with soluble adenylyl cyclase (sAC). As to expression, sperm.

It is found in the cell projection. The protein localises to the cilium. Its subcellular location is the flagellum membrane. Functionally, sperm-specific solute carrier involved in intracellular pH regulation of spermatozoa. Required for sperm motility and fertility. Involved in sperm cell hyperactivation, a step needed for sperm motility which is essential late in the preparation of sperm for fertilization. Required for the expression and bicarbonate regulation of the soluble adenylyl cyclase (sAC). The polypeptide is Solute carrier family 9 member C1 (SLC9C1) (Homo sapiens (Human)).